Here is an 80-residue protein sequence, read N- to C-terminus: RNA-binding protein Hfq (80 aa).

The region spanning 10 to 70 is the Sm domain; that stretch reads DLFLNTVRKQ…ISTIMPGQPM (61 aa).

The protein belongs to the Hfq family. As to quaternary structure, homohexamer.

Its function is as follows. RNA chaperone that binds small regulatory RNA (sRNAs) and mRNAs to facilitate mRNA translational regulation in response to envelope stress, environmental stress and changes in metabolite concentrations. Also binds with high specificity to tRNAs. In Rhizobium rhizogenes (strain K84 / ATCC BAA-868) (Agrobacterium radiobacter), this protein is RNA-binding protein Hfq.